Reading from the N-terminus, the 178-residue chain is Probable coatomer subunit zeta-B (178 aa).

Belongs to the adaptor complexes small subunit family. In terms of assembly, oligomeric complex that consists of at least the alpha, beta, beta', gamma, delta, epsilon and zeta subunits.

Its subcellular location is the cytoplasm. The protein resides in the golgi apparatus membrane. It is found in the cytoplasmic vesicle. The protein localises to the COPI-coated vesicle membrane. Functionally, the coatomer is a cytosolic protein complex that binds to dilysine motifs and reversibly associates with Golgi non-clathrin-coated vesicles, which further mediate biosynthetic protein transport from the ER, via the Golgi up to the trans Golgi network. Coatomer complex is required for budding from Golgi membranes, and is essential for the retrograde Golgi-to-ER transport of dilysine-tagged proteins. The zeta subunit may be involved in regulating the coat assembly and, hence, the rate of biosynthetic protein transport due to its association-dissociation properties with the coatomer complex. This chain is Probable coatomer subunit zeta-B (copZb), found in Dictyostelium discoideum (Social amoeba).